The primary structure comprises 525 residues: MSEYLQQIAKRRTFAIISHPDAGKTTITEKMLLFGNAIKTAGTVKAKKSGIHATSDWMEMEKQRGISITTSVMQFPYNGRIINLLDTPGHEDFSEDTYRTLTAVDSALMVVDAVKGVEDRTIKLMNVCRLRDTPIVTFMNKFDRDTRDPLELLDEVENILKIKCAPINWPIGMGKYFKGVYDLYNDEVTLFETGHGHEIYPYKKIKGLANAKDAIGIDLYEDLEMEIDLVRGASHEFDEQEFLEGNLTPVYFGTALSNFGVKEMMDGFTRYAPAPQHREADQRVVAADEQKLTGFVFKIQANMDEKHRNRIAFFRICSGKYEKGMKIFHERTGKQMQISKALTFMAGEREQVEEGYAGDIIGLHNHGSIQIGDSFTQGEKLKFKGIPNFAPEIFKRVKLNDPLKMKALQKGLVQLSEEGATQVFKPFISNDLVLGAVGVLQFDVVAQRLASEYNVKCSYEGVNVTLARWIFCNDEKKLNDFKKKYEVNLAYDGAGYLTYLAPTGVNLQLAQEKNPDIIFSATREH.

A tr-type G domain is found at 9-276 (AKRRTFAIIS…GFTRYAPAPQ (268 aa)). GTP-binding positions include 18–25 (SHPDAGKT), 86–90 (DTPGH), and 140–143 (NKFD).

Belongs to the TRAFAC class translation factor GTPase superfamily. Classic translation factor GTPase family. PrfC subfamily.

It is found in the cytoplasm. Increases the formation of ribosomal termination complexes and stimulates activities of RF-1 and RF-2. It binds guanine nucleotides and has strong preference for UGA stop codons. It may interact directly with the ribosome. The stimulation of RF-1 and RF-2 is significantly reduced by GTP and GDP, but not by GMP. The protein is Peptide chain release factor 3 of Francisella tularensis subsp. tularensis (strain FSC 198).